Here is a 316-residue protein sequence, read N- to C-terminus: Transcription initiation factor IIB (316 aa).

The TFIIB-type zinc-finger motif lies at 7 to 38 (FRLRCPVCGSTDIVFNEETGEYVCARCGTIVL). Positions 11, 14, 30, and 33 each coordinate Zn(2+). Residues 51–73 (FTPEERERRGRTGAPLSPTLHDH) form a disordered region. 2 repeat units span residues 124 to 207 (NELD…TKEL) and 218 to 299 (DHIP…EIMK).

The protein belongs to the TFIIB family.

In terms of biological role, stabilizes TBP binding to an archaeal box-A promoter. Also responsible for recruiting RNA polymerase II to the pre-initiation complex (DNA-TBP-TFIIB). The polypeptide is Transcription initiation factor IIB (Ignicoccus hospitalis (strain KIN4/I / DSM 18386 / JCM 14125)).